A 540-amino-acid chain; its full sequence is Chaperonin GroEL (540 aa).

Residues 30–33 (TLGP), 87–91 (DGTTT), Gly415, and Asp496 each bind ATP.

This sequence belongs to the chaperonin (HSP60) family. In terms of assembly, forms a cylinder of 14 subunits composed of two heptameric rings stacked back-to-back. Interacts with the co-chaperonin GroES.

Its subcellular location is the cytoplasm. It catalyses the reaction ATP + H2O + a folded polypeptide = ADP + phosphate + an unfolded polypeptide.. Functionally, together with its co-chaperonin GroES, plays an essential role in assisting protein folding. The GroEL-GroES system forms a nano-cage that allows encapsulation of the non-native substrate proteins and provides a physical environment optimized to promote and accelerate protein folding. The chain is Chaperonin GroEL from Symbiobacterium thermophilum (strain DSM 24528 / JCM 14929 / IAM 14863 / T).